The chain runs to 132 residues: Small ribosomal subunit protein uS8 (132 aa).

This sequence belongs to the universal ribosomal protein uS8 family. In terms of assembly, part of the 30S ribosomal subunit. Contacts proteins S5 and S12.

Its function is as follows. One of the primary rRNA binding proteins, it binds directly to 16S rRNA central domain where it helps coordinate assembly of the platform of the 30S subunit. In Rhizobium rhizogenes (strain K84 / ATCC BAA-868) (Agrobacterium radiobacter), this protein is Small ribosomal subunit protein uS8.